Reading from the N-terminus, the 501-residue chain is Acid-sensing ion channel 1A (501 aa).

The Cytoplasmic segment spans residues 1–54; the sequence is MKTSVMDLKVEPMDIDFDQPPPLQVFAHTSTLHGISHIFSYEKITAKCCLWVVF. A helical membrane pass occupies residues 55-71; the sequence is FLSSLTFLMYVCIDRIQ. Topologically, residues 72 to 429 are extracellular; that stretch reads FYLEYPHVTK…ETIEQRKAYE (358 aa). Cystine bridges form between cysteine 98–cysteine 199, cysteine 177–cysteine 184, cysteine 294–cysteine 369, cysteine 312–cysteine 365, cysteine 316–cysteine 363, cysteine 325–cysteine 347, and cysteine 327–cysteine 339. Asparagine 164 carries an N-linked (GlcNAc...) asparagine glycan. N-linked (GlcNAc...) asparagine glycosylation is present at asparagine 370. The chain crosses the membrane as a discontinuously helical span at residues 430–460; the sequence is VAGLLGDIGGQMGLFIGASILTILELFDYLY. The GAS motif; ion selectivity filter signature appears at 446 to 448; sequence GAS. Topologically, residues 461–501 are cytoplasmic; that stretch reads EVMKYRLCRCSNKKHHNNNNNTDHNAVFSLDDVNCHVSKFH.

Belongs to the amiloride-sensitive sodium channel (TC 1.A.6) family. ASIC1 subfamily. Homotrimer. Heterotrimer; with other ASIC proteins producing channel with different properties. Interacts with asic1c. As to expression, expressed in central nervous system. Faintly expressed in the trunk, presumably in dorsal root ganglia.

It is found in the cell membrane. Its subcellular location is the postsynaptic cell membrane. The protein localises to the cell projection. The protein resides in the dendrite. It catalyses the reaction Na(+)(in) = Na(+)(out). The enzyme catalyses K(+)(in) = K(+)(out). The catalysed reaction is Li(+)(in) = Li(+)(out). It carries out the reaction Ca(2+)(in) = Ca(2+)(out). Inhibited by the diuretic drug amiloride. Forms voltage-independent, pH-gated trimeric sodium channels that act as postsynaptic excitatory receptors in the nervous system, playing a crucial role in regulating synaptic plasticity, learning, and memory. Upon extracellular pH drop this channel elicits transient, fast activating, and completely desensitizing inward currents. Displays high selectivity for sodium ions but can also permit the permeation of other cations. The sequence is that of Acid-sensing ion channel 1A (asic1a) from Danio rerio (Zebrafish).